The sequence spans 112 residues: Photosystem II reaction center Psb28 protein (112 aa).

The protein belongs to the Psb28 family. As to quaternary structure, part of the photosystem II complex.

The protein resides in the plastid. It is found in the cyanelle thylakoid membrane. The protein is Photosystem II reaction center Psb28 protein of Cyanophora paradoxa.